We begin with the raw amino-acid sequence, 457 residues long: MWGGRFSEATDSFVAAFTASVGFDQRFARHDIQGSIAHATMLRECGILEADDVATIIDGLHQVLREIEAGEFNWSIALEDVHMNVESRLTDIVGAVGKKLHTGRSRNDQVATDIRLWLREETDNIIALLVRLQSGLLDLAEQHTDTIMPGFTHLQTAQPVSFGHHVMAWFEMLYRDTERLVDARRRINQMPLGSAALAGTTFPIDRTITAELLGFEGICQNSLDAVSDRDFAIEFTSAASILMMHMSRMSEEIILWMSAQFNFVQIPDRFCTGSSIMPQKKNPDVPELVRGKAARVFGQLMTLLSLMKSQPLAYNKDNQEDKEPLFDCVDTLTGSLLAFADMLPNITPNKENMRAATMKGYATATDLADYLVRRGVAFRDAHEVVGNAVALGIAEGVDLSDLSLAQLQQFSDAIGEDVFEYLTLEGSLAARDHLGGTAPNQVKQAVSRGRTRLELFA.

This sequence belongs to the lyase 1 family. Argininosuccinate lyase subfamily.

It is found in the cytoplasm. The enzyme catalyses 2-(N(omega)-L-arginino)succinate = fumarate + L-arginine. It participates in amino-acid biosynthesis; L-arginine biosynthesis; L-arginine from L-ornithine and carbamoyl phosphate: step 3/3. The chain is Argininosuccinate lyase from Psychrobacter cryohalolentis (strain ATCC BAA-1226 / DSM 17306 / VKM B-2378 / K5).